The sequence spans 358 residues: Chromatin modification-related protein EAF3 (358 aa).

A Tudor-knot domain is found at 8–84; the sequence is KCLCYHGPLL…DEWVGLDRIR (77 aa). The disordered stretch occupies residues 103-184; it reads ELKNNGGKKK…KATPVLNKRS (82 aa). Residues 132–168 are compositionally biased toward low complexity; that stretch reads SRTSNSGSGTNTSASSTSASNPASSSSSGTTAAASSS. One can recognise an MRG domain in the interval 184–356; the sequence is SHPKIHIKVP…TSSQYEGVAL (173 aa).

This sequence belongs to the MRG family. Component of the NuA4 histone acetyltransferase complex.

The protein resides in the nucleus. Functionally, involved in deacetylation of histones, chromatin assembly and chromosome segregation. May act as a transcriptional oscillator, directing histone deacetylases to specific chromosomal domains. Component of the NuA4 histone acetyltransferase complex which is involved in transcriptional activation of selected genes principally by acetylation of nucleosomal histone H4 and H2A. The NuA4 complex is also involved in DNA repair. The protein is Chromatin modification-related protein EAF3 (EAF3) of Kluyveromyces lactis (strain ATCC 8585 / CBS 2359 / DSM 70799 / NBRC 1267 / NRRL Y-1140 / WM37) (Yeast).